The primary structure comprises 221 residues: Imidazole glycerol phosphate synthase subunit HisH (221 aa).

Positions 9 to 221 (DVVIIDTGCA…QILGNFLKMQ (213 aa)) constitute a Glutamine amidotransferase type-1 domain. Cys-84 functions as the Nucleophile in the catalytic mechanism. Catalysis depends on residues His-202 and Glu-204.

In terms of assembly, heterodimer of HisH and HisF.

The protein resides in the cytoplasm. It catalyses the reaction 5-[(5-phospho-1-deoxy-D-ribulos-1-ylimino)methylamino]-1-(5-phospho-beta-D-ribosyl)imidazole-4-carboxamide + L-glutamine = D-erythro-1-(imidazol-4-yl)glycerol 3-phosphate + 5-amino-1-(5-phospho-beta-D-ribosyl)imidazole-4-carboxamide + L-glutamate + H(+). The enzyme catalyses L-glutamine + H2O = L-glutamate + NH4(+). Its pathway is amino-acid biosynthesis; L-histidine biosynthesis; L-histidine from 5-phospho-alpha-D-ribose 1-diphosphate: step 5/9. In terms of biological role, IGPS catalyzes the conversion of PRFAR and glutamine to IGP, AICAR and glutamate. The HisH subunit catalyzes the hydrolysis of glutamine to glutamate and ammonia as part of the synthesis of IGP and AICAR. The resulting ammonia molecule is channeled to the active site of HisF. This Shewanella oneidensis (strain ATCC 700550 / JCM 31522 / CIP 106686 / LMG 19005 / NCIMB 14063 / MR-1) protein is Imidazole glycerol phosphate synthase subunit HisH.